The sequence spans 313 residues: Ribosomal RNA small subunit methyltransferase H (313 aa).

S-adenosyl-L-methionine contacts are provided by residues 35–37 (GGH), D55, F79, D101, and Q108.

It belongs to the methyltransferase superfamily. RsmH family.

The protein resides in the cytoplasm. It catalyses the reaction cytidine(1402) in 16S rRNA + S-adenosyl-L-methionine = N(4)-methylcytidine(1402) in 16S rRNA + S-adenosyl-L-homocysteine + H(+). Its function is as follows. Specifically methylates the N4 position of cytidine in position 1402 (C1402) of 16S rRNA. This chain is Ribosomal RNA small subunit methyltransferase H, found in Shigella flexneri.